The following is a 307-amino-acid chain: Mitochondrial thiamine pyrophosphate carrier 1 (307 aa).

3 Solcar repeats span residues 13–95 (VSTT…IGSF), 105–190 (SPQL…IKIF), and 203–305 (PFTL…FMNK). Helical transmembrane passes span 19–36 (LVAG…IAPL), 76–96 (IMYI…GSFL), 108–126 (LYSC…LASY), 160–184 (MGFF…FGVY), 210–226 (LAGP…TFPL), and 280–297 (GVTM…ISLW).

It belongs to the mitochondrial carrier (TC 2.A.29) family.

Its subcellular location is the mitochondrion inner membrane. Mitochondrial transporter that mediates uptake of thiamine pyrophosphate (ThPP) into mitochondria. In Candida glabrata (strain ATCC 2001 / BCRC 20586 / JCM 3761 / NBRC 0622 / NRRL Y-65 / CBS 138) (Yeast), this protein is Mitochondrial thiamine pyrophosphate carrier 1 (TPC1).